The primary structure comprises 173 residues: ATP synthase subunit b (173 aa).

The chain crosses the membrane as a helical span at residues 20–40; the sequence is IIATLAIFLVLMFLLKKVAWG.

The protein belongs to the ATPase B chain family. F-type ATPases have 2 components, F(1) - the catalytic core - and F(0) - the membrane proton channel. F(1) has five subunits: alpha(3), beta(3), gamma(1), delta(1), epsilon(1). F(0) has three main subunits: a(1), b(2) and c(10-14). The alpha and beta chains form an alternating ring which encloses part of the gamma chain. F(1) is attached to F(0) by a central stalk formed by the gamma and epsilon chains, while a peripheral stalk is formed by the delta and b chains.

It is found in the cell membrane. In terms of biological role, f(1)F(0) ATP synthase produces ATP from ADP in the presence of a proton or sodium gradient. F-type ATPases consist of two structural domains, F(1) containing the extramembraneous catalytic core and F(0) containing the membrane proton channel, linked together by a central stalk and a peripheral stalk. During catalysis, ATP synthesis in the catalytic domain of F(1) is coupled via a rotary mechanism of the central stalk subunits to proton translocation. Its function is as follows. Component of the F(0) channel, it forms part of the peripheral stalk, linking F(1) to F(0). In Lysinibacillus sphaericus (strain C3-41), this protein is ATP synthase subunit b.